The following is a 135-amino-acid chain: Small ribosomal subunit protein uS12 (135 aa).

3-methylthioaspartic acid is present on D89. The tract at residues 114-135 is disordered; it reads RSRYGAKKGAAKQAAAAKSKKK. Residues 124-135 show a composition bias toward low complexity; the sequence is AKQAAAAKSKKK.

This sequence belongs to the universal ribosomal protein uS12 family. As to quaternary structure, part of the 30S ribosomal subunit. Contacts proteins S8 and S17. May interact with IF1 in the 30S initiation complex.

With S4 and S5 plays an important role in translational accuracy. Functionally, interacts with and stabilizes bases of the 16S rRNA that are involved in tRNA selection in the A site and with the mRNA backbone. Located at the interface of the 30S and 50S subunits, it traverses the body of the 30S subunit contacting proteins on the other side and probably holding the rRNA structure together. The combined cluster of proteins S8, S12 and S17 appears to hold together the shoulder and platform of the 30S subunit. The sequence is that of Small ribosomal subunit protein uS12 from Amoebophilus asiaticus (strain 5a2).